The following is a 432-amino-acid chain: Enolase (432 aa).

Q164 provides a ligand contact to (2R)-2-phosphoglycerate. E206 (proton donor) is an active-site residue. Residues D243, E284, and D311 each contribute to the Mg(2+) site. Residues K336, R365, S366, and K387 each coordinate (2R)-2-phosphoglycerate. Catalysis depends on K336, which acts as the Proton acceptor.

This sequence belongs to the enolase family. Requires Mg(2+) as cofactor.

It localises to the cytoplasm. Its subcellular location is the secreted. The protein resides in the cell surface. It carries out the reaction (2R)-2-phosphoglycerate = phosphoenolpyruvate + H2O. It functions in the pathway carbohydrate degradation; glycolysis; pyruvate from D-glyceraldehyde 3-phosphate: step 4/5. In terms of biological role, catalyzes the reversible conversion of 2-phosphoglycerate (2-PG) into phosphoenolpyruvate (PEP). It is essential for the degradation of carbohydrates via glycolysis. This Synechococcus sp. (strain JA-3-3Ab) (Cyanobacteria bacterium Yellowstone A-Prime) protein is Enolase.